Here is a 241-residue protein sequence, read N- to C-terminus: Superoxide dismutase [Mn] 2, mitochondrial (241 aa).

Positions 60, 108, 197, and 201 each coordinate Mn(2+).

It belongs to the iron/manganese superoxide dismutase family. As to quaternary structure, homotetramer. Mn(2+) serves as cofactor.

The protein localises to the mitochondrion matrix. The enzyme catalyses 2 superoxide + 2 H(+) = H2O2 + O2. Its function is as follows. Destroys superoxide anion radicals which are normally produced within the cells and which are toxic to biological systems. In Arabidopsis thaliana (Mouse-ear cress), this protein is Superoxide dismutase [Mn] 2, mitochondrial (MSD2).